Consider the following 349-residue polypeptide: Quinolinate synthase (349 aa).

Residues H52 and S69 each contribute to the iminosuccinate site. C114 contributes to the [4Fe-4S] cluster binding site. Iminosuccinate contacts are provided by residues 140 to 142 (YVN) and S157. Position 201 (C201) interacts with [4Fe-4S] cluster. Iminosuccinate contacts are provided by residues 227–229 (HPE) and T255. Residue C300 coordinates [4Fe-4S] cluster.

Belongs to the quinolinate synthase family. Type 2 subfamily. [4Fe-4S] cluster is required as a cofactor.

Its subcellular location is the cytoplasm. It carries out the reaction iminosuccinate + dihydroxyacetone phosphate = quinolinate + phosphate + 2 H2O + H(+). The protein operates within cofactor biosynthesis; NAD(+) biosynthesis; quinolinate from iminoaspartate: step 1/1. Catalyzes the condensation of iminoaspartate with dihydroxyacetone phosphate to form quinolinate. The protein is Quinolinate synthase of Mycobacterium bovis (strain BCG / Tokyo 172 / ATCC 35737 / TMC 1019).